A 484-amino-acid chain; its full sequence is BAHD acyltransferase DCR (484 aa).

Catalysis depends on His168, which acts as the Proton acceptor. Residues 211-233 (LDLTAPKDPNETSNGEDAANPTV) are disordered. Asp394 (proton acceptor) is an active-site residue. The disordered stretch occupies residues 452–484 (EEEEDDGKKLTNGNGHVNGNGNGYVNGNGNGFV). Positions 467-484 (HVNGNGNGYVNGNGNGFV) are enriched in gly residues.

The protein belongs to the plant acyltransferase family. As to expression, expressed in root caps and lateral root emerging sites, in trichomes, in epidermis in stems, sepals and anther filaments, and in pollen grains and torpedo stage seeds.

It localises to the cytoplasm. The protein localises to the cytosol. Its function is as follows. Required for incorporation of 9(10),16-dihydroxy-hexadecanoic acid into cutin. The sequence is that of BAHD acyltransferase DCR (DCR) from Arabidopsis thaliana (Mouse-ear cress).